The primary structure comprises 235 residues: Phosphoribosylaminoimidazole-succinocarboxamide synthase (235 aa).

The protein belongs to the SAICAR synthetase family.

It carries out the reaction 5-amino-1-(5-phospho-D-ribosyl)imidazole-4-carboxylate + L-aspartate + ATP = (2S)-2-[5-amino-1-(5-phospho-beta-D-ribosyl)imidazole-4-carboxamido]succinate + ADP + phosphate + 2 H(+). It functions in the pathway purine metabolism; IMP biosynthesis via de novo pathway; 5-amino-1-(5-phospho-D-ribosyl)imidazole-4-carboxamide from 5-amino-1-(5-phospho-D-ribosyl)imidazole-4-carboxylate: step 1/2. The protein is Phosphoribosylaminoimidazole-succinocarboxamide synthase of Clostridium botulinum (strain Eklund 17B / Type B).